A 307-amino-acid polypeptide reads, in one-letter code: Aspartate carbamoyltransferase catalytic subunit (307 aa).

Carbamoyl phosphate contacts are provided by R56 and T57. K84 provides a ligand contact to L-aspartate. Carbamoyl phosphate contacts are provided by R106, H136, and Q139. Residues R169 and R221 each coordinate L-aspartate. Carbamoyl phosphate is bound by residues A262 and P263.

This sequence belongs to the aspartate/ornithine carbamoyltransferase superfamily. ATCase family. As to quaternary structure, heterododecamer (2C3:3R2) of six catalytic PyrB chains organized as two trimers (C3), and six regulatory PyrI chains organized as three dimers (R2).

The enzyme catalyses carbamoyl phosphate + L-aspartate = N-carbamoyl-L-aspartate + phosphate + H(+). Its pathway is pyrimidine metabolism; UMP biosynthesis via de novo pathway; (S)-dihydroorotate from bicarbonate: step 2/3. Its function is as follows. Catalyzes the condensation of carbamoyl phosphate and aspartate to form carbamoyl aspartate and inorganic phosphate, the committed step in the de novo pyrimidine nucleotide biosynthesis pathway. The polypeptide is Aspartate carbamoyltransferase catalytic subunit (Streptococcus pneumoniae serotype 2 (strain D39 / NCTC 7466)).